Here is a 156-residue protein sequence, read N- to C-terminus: Small ribosomal subunit protein uS7 (156 aa).

It belongs to the universal ribosomal protein uS7 family. As to quaternary structure, part of the 30S ribosomal subunit. Contacts proteins S9 and S11.

Functionally, one of the primary rRNA binding proteins, it binds directly to 16S rRNA where it nucleates assembly of the head domain of the 30S subunit. Is located at the subunit interface close to the decoding center, probably blocks exit of the E-site tRNA. In Agrobacterium fabrum (strain C58 / ATCC 33970) (Agrobacterium tumefaciens (strain C58)), this protein is Small ribosomal subunit protein uS7.